The chain runs to 100 residues: Urease subunit gamma (100 aa).

This sequence belongs to the urease gamma subunit family. In terms of assembly, heterotrimer of UreA (gamma), UreB (beta) and UreC (alpha) subunits. Three heterotrimers associate to form the active enzyme.

Its subcellular location is the cytoplasm. It catalyses the reaction urea + 2 H2O + H(+) = hydrogencarbonate + 2 NH4(+). It participates in nitrogen metabolism; urea degradation; CO(2) and NH(3) from urea (urease route): step 1/1. The protein is Urease subunit gamma of Variovorax paradoxus (strain S110).